An 86-amino-acid polypeptide reads, in one-letter code: Putative membrane protein insertion efficiency factor (86 aa).

The disordered stretch occupies residues 66 to 86 (PLHEGGDDPVPPRKNDDNREN).

Belongs to the UPF0161 family.

It is found in the cell inner membrane. Functionally, could be involved in insertion of integral membrane proteins into the membrane. This is Putative membrane protein insertion efficiency factor from Proteus mirabilis (strain HI4320).